The sequence spans 321 residues: Malate dehydrogenase (321 aa).

Residues Gly-10–Gly-15 and Asp-34 contribute to the NAD(+) site. Substrate-binding residues include Arg-83 and Arg-89. NAD(+)-binding positions include Asn-96 and Ile-119–Asn-121. Substrate contacts are provided by Asn-121 and Arg-152. Residue His-176 is the Proton acceptor of the active site.

Belongs to the LDH/MDH superfamily. MDH type 3 family.

The enzyme catalyses (S)-malate + NAD(+) = oxaloacetate + NADH + H(+). Its function is as follows. Catalyzes the reversible oxidation of malate to oxaloacetate. The polypeptide is Malate dehydrogenase (Chelativorans sp. (strain BNC1)).